Here is a 285-residue protein sequence, read N- to C-terminus: Dihydropteroate synthase (285 aa).

Positions 25-271 (TLVMGILNVT…DVKQIARMAK (247 aa)) constitute a Pterin-binding domain. Position 32 (Asn32) interacts with Mg(2+). (7,8-dihydropterin-6-yl)methyl diphosphate is bound by residues Thr72, Asp106, Asn125, Asp189, Lys225, and 259–261 (RVH).

This sequence belongs to the DHPS family. It depends on Mg(2+) as a cofactor.

The enzyme catalyses (7,8-dihydropterin-6-yl)methyl diphosphate + 4-aminobenzoate = 7,8-dihydropteroate + diphosphate. The protein operates within cofactor biosynthesis; tetrahydrofolate biosynthesis; 7,8-dihydrofolate from 2-amino-4-hydroxy-6-hydroxymethyl-7,8-dihydropteridine diphosphate and 4-aminobenzoate: step 1/2. Functionally, catalyzes the condensation of para-aminobenzoate (pABA) with 6-hydroxymethyl-7,8-dihydropterin diphosphate (DHPt-PP) to form 7,8-dihydropteroate (H2Pte), the immediate precursor of folate derivatives. In Bacillus subtilis (strain 168), this protein is Dihydropteroate synthase (sul).